The sequence spans 310 residues: E3 ubiquitin-protein ligase AIP2 (310 aa).

The segment at 230–271 adopts an RING-type; atypical zinc-finger fold; the sequence is CCICKENLVIGDKMQELPCKHTFHPPCLKPWLDEHNSCPICR. Residues 276-306 adopt a coiled-coil conformation; the sequence is TDDQKYENWKEREKEAEEERKGAENAVRGGE. Over residues 285-298 the composition is skewed to basic and acidic residues; the sequence is KEREKEAEEERKGA. The disordered stretch occupies residues 285–310; that stretch reads KEREKEAEEERKGAENAVRGGEYMYV.

In terms of assembly, interacts with ABI3 (via C-terminus). Auto-ubiquitinated. As to expression, highly expressed in leaves and at lower levels in flowers and seeds.

The protein localises to the nucleus. It is found in the cytoplasm. The catalysed reaction is S-ubiquitinyl-[E2 ubiquitin-conjugating enzyme]-L-cysteine + [acceptor protein]-L-lysine = [E2 ubiquitin-conjugating enzyme]-L-cysteine + N(6)-ubiquitinyl-[acceptor protein]-L-lysine.. It participates in protein modification; protein ubiquitination. Functionally, E3 ubiquitin-protein ligase that acts as a negative regulator of abscisic acid (ABA) signaling. Mediates ubiquitination and subsequent proteasomal degradation of the transcription factor ABI3. In Arabidopsis thaliana (Mouse-ear cress), this protein is E3 ubiquitin-protein ligase AIP2 (AIP2).